The primary structure comprises 194 residues: 3-isopropylmalate dehydratase small subunit (194 aa).

The protein belongs to the LeuD family. LeuD type 1 subfamily. As to quaternary structure, heterodimer of LeuC and LeuD.

The catalysed reaction is (2R,3S)-3-isopropylmalate = (2S)-2-isopropylmalate. It functions in the pathway amino-acid biosynthesis; L-leucine biosynthesis; L-leucine from 3-methyl-2-oxobutanoate: step 2/4. In terms of biological role, catalyzes the isomerization between 2-isopropylmalate and 3-isopropylmalate, via the formation of 2-isopropylmaleate. This Halalkalibacterium halodurans (strain ATCC BAA-125 / DSM 18197 / FERM 7344 / JCM 9153 / C-125) (Bacillus halodurans) protein is 3-isopropylmalate dehydratase small subunit.